A 195-amino-acid polypeptide reads, in one-letter code: Endoribonuclease YbeY (195 aa).

Zn(2+)-binding residues include H152, H156, and H162.

It belongs to the endoribonuclease YbeY family. It depends on Zn(2+) as a cofactor.

It localises to the cytoplasm. Functionally, single strand-specific metallo-endoribonuclease involved in late-stage 70S ribosome quality control and in maturation of the 3' terminus of the 16S rRNA. This chain is Endoribonuclease YbeY, found in Rhodopseudomonas palustris (strain BisB5).